The following is a 737-amino-acid chain: Glycogen [starch] synthase, muscle (737 aa).

Ser-8 is subject to Phosphoserine; by AMPK and PKA. Residue Ser-11 is modified to Phosphoserine. Lys-39 is a UDP binding site. Positions 205 and 211 each coordinate UDP-alpha-D-glucose. His-291, Glu-292, Gln-294, His-297, and Lys-301 together coordinate alpha-D-glucose 6-phosphate. Residue Arg-331 coordinates UDP. UDP-alpha-D-glucose is bound at residue Arg-331. Phosphoserine is present on Ser-412. His-501 is a binding site for alpha-D-glucose 6-phosphate. Residues Glu-510, Trp-512, and Gly-513 each coordinate UDP-alpha-D-glucose. Thr-515 provides a ligand contact to UDP. Alpha-D-glucose 6-phosphate contacts are provided by Arg-582 and Arg-586. The tract at residues 634–737 (YRYPRPASVP…PTSSLGEERN (104 aa)) is disordered. 4 positions are modified to phosphoserine: Ser-641, Ser-645, Ser-649, and Ser-652. Ser-653 bears the Phosphoserine; by GSK3-alpha and GSK3-beta mark. A Phosphoserine; by CK2 modification is found at Ser-657. Positions 658–681 (EDEEDPRNGPLEEDGERYDEDEEA) are enriched in acidic residues. Residues 682 to 695 (AKDRRNIRAPEWPR) show a composition bias toward basic and acidic residues. Position 698 is a phosphoserine (Ser-698). Over residues 698–714 (SCTSSTSGSKRNSVDTA) the composition is skewed to polar residues. Phosphothreonine is present on Thr-700. Phosphoserine is present on Ser-710. The span at 715 to 737 (TSSSLSTPSEPLSPTSSLGEERN) shows a compositional bias: low complexity. Thr-721 carries the post-translational modification Phosphothreonine. Phosphoserine is present on residues Ser-727 and Ser-731.

The protein belongs to the glycosyltransferase 3 family. In terms of assembly, part of the GYS1-GYG1 complex, a heterooctamer composed of a tetramer of GYS1 and 2 dimers of GYG1, where each GYS1 protomer binds to one GYG1 subunit (via GYG1 C-terminus); the GYS1 tetramer may dissociate from GYG1 dimers to continue glycogen polymerization on its own. Phosphorylation at Ser-8 by AMPK inactivates the enzyme activity. Primed phosphorylation at Ser-657 (site 5) by CSNK2A1 and CSNK2A2 is required for inhibitory phosphorylation at Ser-641 (site 3a), Ser-645 (site 3b), Ser-649 (site 3c) and Ser-653 (site 4) by GSK3A an GSK3B. Phosphorylated at Ser-641 by DYRK2, leading to inactivation. Phosphorylated at Ser-641 by PASK, leading to inactivation; phosphorylation by PASK is inhibited by glycogen. Dephosphorylation at Ser-641 and Ser-645 by PP1 activates the enzyme. As to expression, expressed in skeletal muscle and most other cell types where glycogen is present.

It carries out the reaction [(1-&gt;4)-alpha-D-glucosyl](n) + UDP-alpha-D-glucose = [(1-&gt;4)-alpha-D-glucosyl](n+1) + UDP + H(+). Its pathway is glycan biosynthesis; glycogen biosynthesis. With respect to regulation, allosteric activation by glucose-6-phosphate. Phosphorylation reduces enzyme activity by constraining a tense conformation of the tetramer through inter-subunit interaction. Phosphorylation reduces the activity towards UDP-glucose. When in the non-phosphorylated state, glycogen synthase does not require glucose-6-phosphate as an allosteric activator; when phosphorylated it does. Glycogen synthase participates in the glycogen biosynthetic process along with glycogenin and glycogen branching enzyme. Extends the primer composed of a few glucose units formed by glycogenin by adding new glucose units to it. In this context, glycogen synthase transfers the glycosyl residue from UDP-Glc to the non-reducing end of alpha-1,4-glucan. In Homo sapiens (Human), this protein is Glycogen [starch] synthase, muscle.